The primary structure comprises 682 residues: Potassium-transporting ATPase ATP-binding subunit (682 aa).

Transmembrane regions (helical) follow at residues 34 to 54, 62 to 82, 219 to 239, and 254 to 274; these read PVMF…IAMA, ALFS…ANFA, IALT…TATL, and VLVA…LSAI. D307 serves as the catalytic 4-aspartylphosphate intermediate. ATP contacts are provided by residues D344, E348, 377-384, and K395; that span reads FTAQSRMS. The Mg(2+) site is built by D518 and D522. A run of 3 helical transmembrane segments spans residues 588-608, 616-636, and 656-676; these read FAII…LNIM, AILS…PLAL, and IYGL…DLLL.

It belongs to the cation transport ATPase (P-type) (TC 3.A.3) family. Type IA subfamily. As to quaternary structure, the system is composed of three essential subunits: KdpA, KdpB and KdpC.

It is found in the cell inner membrane. The enzyme catalyses K(+)(out) + ATP + H2O = K(+)(in) + ADP + phosphate + H(+). In terms of biological role, part of the high-affinity ATP-driven potassium transport (or Kdp) system, which catalyzes the hydrolysis of ATP coupled with the electrogenic transport of potassium into the cytoplasm. This subunit is responsible for energy coupling to the transport system and for the release of the potassium ions to the cytoplasm. The protein is Potassium-transporting ATPase ATP-binding subunit of Escherichia coli O6:K15:H31 (strain 536 / UPEC).